Reading from the N-terminus, the 423-residue chain is Glucose-1-phosphate adenylyltransferase (423 aa).

Residues tyrosine 107, glycine 172, 187-188 (EK), and serine 205 each bind alpha-D-glucose 1-phosphate.

Belongs to the bacterial/plant glucose-1-phosphate adenylyltransferase family. In terms of assembly, homotetramer.

It catalyses the reaction alpha-D-glucose 1-phosphate + ATP + H(+) = ADP-alpha-D-glucose + diphosphate. It functions in the pathway glycan biosynthesis; glycogen biosynthesis. Functionally, involved in the biosynthesis of ADP-glucose, a building block required for the elongation reactions to produce glycogen. Catalyzes the reaction between ATP and alpha-D-glucose 1-phosphate (G1P) to produce pyrophosphate and ADP-Glc. The chain is Glucose-1-phosphate adenylyltransferase from Albidiferax ferrireducens (strain ATCC BAA-621 / DSM 15236 / T118) (Rhodoferax ferrireducens).